Reading from the N-terminus, the 1403-residue chain is Baculoviral IAP repeat-containing protein 1f (1403 aa).

3 BIR repeats span residues 60–127 (EAKR…CEFL), 159–227 (EEAR…CEFL), and 278–345 (EELR…CVFL). Zn(2+) is bound by residues C315, C318, H335, and C342. The 296-residue stretch at 464–759 (SVMCVEGEAG…EFLAAVRLTE (296 aa)) folds into the NACHT domain. 473 to 478 (GSGKTT) lines the ATP pocket.

Component of the NLRC4 inflammasome, at least composed of NLRC4, caspase-1 (CASP1) and some NAIP protein. As to quaternary structure, (Microbial infection) Interacts with S.typhimurium (Salmonella) flagellin.

Sensor component of the NLRC4 inflammasome that specifically recognizes and binds flagellin from pathogenic bacteria. Association of pathogenic bacteria proteins drives in turn drive assembly and activation of the NLRC4 inflammasome, promoting caspase-1 activation, cytokine production and macrophage pyroptosis. The NLRC4 inflammasome is activated as part of the innate immune response to a range of intracellular bacteria. The NLRC4 inflammasome senses Gram-negative bacteria such as L.pneumophila and P.aeruginosa, enteric pathogens S.typhimurium (Salmonella) and S.flexneri. May contribute to prevent motor-neuron apoptosis induced by a variety of signals. The polypeptide is Baculoviral IAP repeat-containing protein 1f (Naip6) (Mus musculus (Mouse)).